Reading from the N-terminus, the 200-residue chain is Lipopolysaccharide core heptose(II)-phosphate phosphatase (200 aa).

The signal sequence occupies residues 1–25; it reads MLAFCRSSLKSKKYFIILLALAAIA.

The protein belongs to the phosphoglycerate mutase family. Ais subfamily.

The protein localises to the periplasm. The protein operates within bacterial outer membrane biogenesis; lipopolysaccharide metabolism. Its function is as follows. Catalyzes the dephosphorylation of heptose(II) of the outer membrane lipopolysaccharide core. The protein is Lipopolysaccharide core heptose(II)-phosphate phosphatase of Shigella flexneri serotype 5b (strain 8401).